The chain runs to 113 residues: MKKFAIKFIAFYQKYISILLPKSCRYYPTCSQYAIWEFQTNSFFSAFFATFMRILRCNQLFKGGINYPIIRKKFNSCFIFQKSDTKNVNFWFIPCQNSKFYVVKVLDKLKEKN.

It belongs to the UPF0161 family.

It is found in the cell inner membrane. Its function is as follows. Could be involved in insertion of integral membrane proteins into the membrane. The protein is Putative membrane protein insertion efficiency factor of Campylobacter concisus (strain 13826).